The following is a 207-amino-acid chain: Superoxide dismutase [Mn] (207 aa).

Mn(2+) contacts are provided by histidine 27, histidine 82, aspartate 169, and histidine 173.

The protein belongs to the iron/manganese superoxide dismutase family. Requires Mn(2+) as cofactor.

It carries out the reaction 2 superoxide + 2 H(+) = H2O2 + O2. In terms of biological role, destroys superoxide anion radicals which are normally produced within the cells and which are toxic to biological systems. The polypeptide is Superoxide dismutase [Mn] (sodA) (Yersinia enterocolitica).